The sequence spans 503 residues: Apolipoprotein N-acyltransferase (503 aa).

7 helical membrane passes run Arg13–Leu32, Met34–Val54, Ala63–Pro83, Ile102–Leu122, Tyr124–Phe144, Ile173–Phe193, and Leu203–Leu223. In terms of domain architecture, CN hydrolase spans Phe231–Ala460. Glu273 functions as the Proton acceptor in the catalytic mechanism. Residue Lys321 is part of the active site. Catalysis depends on Cys371, which acts as the Nucleophile. The chain crosses the membrane as a helical span at residues Val468–Ile488.

This sequence belongs to the CN hydrolase family. Apolipoprotein N-acyltransferase subfamily.

The protein localises to the cell inner membrane. The enzyme catalyses N-terminal S-1,2-diacyl-sn-glyceryl-L-cysteinyl-[lipoprotein] + a glycerophospholipid = N-acyl-S-1,2-diacyl-sn-glyceryl-L-cysteinyl-[lipoprotein] + a 2-acyl-sn-glycero-3-phospholipid + H(+). It functions in the pathway protein modification; lipoprotein biosynthesis (N-acyl transfer). Its function is as follows. Catalyzes the phospholipid dependent N-acylation of the N-terminal cysteine of apolipoprotein, the last step in lipoprotein maturation. The sequence is that of Apolipoprotein N-acyltransferase from Thermotoga maritima (strain ATCC 43589 / DSM 3109 / JCM 10099 / NBRC 100826 / MSB8).